The following is a 273-amino-acid chain: Bis(5'-nucleosyl)-tetraphosphatase, symmetrical (273 aa).

This sequence belongs to the Ap4A hydrolase family.

The enzyme catalyses P(1),P(4)-bis(5'-adenosyl) tetraphosphate + H2O = 2 ADP + 2 H(+). Hydrolyzes diadenosine 5',5'''-P1,P4-tetraphosphate to yield ADP. This Buchnera aphidicola subsp. Schizaphis graminum (strain Sg) protein is Bis(5'-nucleosyl)-tetraphosphatase, symmetrical (apaH).